Here is a 341-residue protein sequence, read N- to C-terminus: Elongation factor Ts (341 aa).

Residues 80 to 83 (TDFV) are involved in Mg(2+) ion dislocation from EF-Tu.

It belongs to the EF-Ts family.

It localises to the cytoplasm. Associates with the EF-Tu.GDP complex and induces the exchange of GDP to GTP. It remains bound to the aminoacyl-tRNA.EF-Tu.GTP complex up to the GTP hydrolysis stage on the ribosome. This is Elongation factor Ts from Lactobacillus johnsonii (strain CNCM I-12250 / La1 / NCC 533).